Reading from the N-terminus, the 605-residue chain is Sodium-independent sulfate anion transporter (605 aa).

Topologically, residues 1 to 50 are extracellular; the sequence is MPSSLKGLGQAWLSSSSMALSACCSVSAWQKRLPVLAWLPRYSLQWLKMD. A helical transmembrane segment spans residues 51-71; the sequence is FIAGLSVGLTVIPQALAYAEV. Residue Ala-72 is a topological domain, cytoplasmic. Residues 73-93 form a helical membrane-spanning segment; that stretch reads GLPPQYGLYSAFTGCFVYVFL. Over 94 to 98 the chain is Extracellular; it reads GTSRD. A helical transmembrane segment spans residues 99–119; the sequence is VTLGPTAIMSLLVSFYTFHEP. Topologically, residues 120–122 are cytoplasmic; it reads AYA. The helical transmembrane segment at 123–143 threads the bilayer; that stretch reads VLLTFLSGCIQLAMGLLHLGF. The Extracellular portion of the chain corresponds to 144–146; the sequence is LLD. Residues 147 to 167 form a helical membrane-spanning segment; it reads FISCPVIKGFTSAAAIIIGFG. The Cytoplasmic portion of the chain corresponds to 168-196; the sequence is QIKNLLGLHNIPRQFFLQVYHTFLSVGET. The helical transmembrane segment at 197–217 threads the bilayer; it reads RLGDAILGLVCMVLLLVLKLM. Residues 218 to 249 lie on the Extracellular side of the membrane; it reads RDRIPPVHPEMPLCVRLSCGLVWTTATARNAL. A helical membrane pass occupies residues 250–270; that stretch reads VVSFAALVAYSFEVTGYQPFI. Over 271-303 the chain is Cytoplasmic; sequence LTGEIAKGLPPVRVPPFSVTMANGTVSFTRMVQ. Residues 304-324 form a helical membrane-spanning segment; the sequence is DLGAGLAVVPLIGLLESIAVA. Residues 325 to 340 lie on the Extracellular side of the membrane; that stretch reads KAFASQNDYHVDANQE. The helical transmembrane segment at 341-361 threads the bilayer; that stretch reads LLAIGLTNMLGSFVSSYPITG. The Cytoplasmic segment spans residues 362 to 373; it reads SFGRTAVNAQSG. The chain crosses the membrane as a helical span at residues 374 to 394; the sequence is VCTPAGGLVTGALVLLSLDYL. Residues 395-397 are Extracellular-facing; that stretch reads TSL. The chain crosses the membrane as a helical span at residues 398–418; it reads FYYIPKAALAAVIIMAVVPLF. Topologically, residues 419–447 are cytoplasmic; the sequence is DTKIFGMLWRVKRLDLLPLCATFLLCFWE. Residues 448–468 form a helical membrane-spanning segment; it reads VQYGILAGTLVSTLFLLHFVA. Residues 469-605 lie on the Extracellular side of the membrane; that stretch reads RPKTQVSEGP…PEHKVTLLTA (137 aa). Residues 479–582 enclose the STAS domain; it reads VLILQLASGL…EKAEQYVRQE (104 aa).

This sequence belongs to the SLC26A/SulP transporter (TC 2.A.53) family.

It is found in the cell membrane. It localises to the lysosome membrane. The protein localises to the apical cell membrane. Its subcellular location is the basolateral cell membrane. The catalysed reaction is hydrogencarbonate(in) + chloride(out) = hydrogencarbonate(out) + chloride(in). It catalyses the reaction sulfate(in) + H(+)(in) = sulfate(out) + H(+)(out). It carries out the reaction oxalate(in) + chloride(out) = oxalate(out) + chloride(in). Functionally, sodium-independent anion exchanger mediating bicarbonate, chloride, sulfate and oxalate transport. Exhibits sodium-independent sulfate anion transporter activity that may cooperate with SLC26A2 to mediate DIDS-sensitive sulfate uptake into high endothelial venules endothelial cells (HEVEC). In the kidney, mediates chloride-bicarbonate exchange, facilitating V-ATPase-mediated acid secretion. May function as a chloride channel, playing an important role in moderating chloride homeostasis and neuronal activity in the cerebellum. The sequence is that of Sodium-independent sulfate anion transporter (Slc26a11) from Cavia porcellus (Guinea pig).